A 177-amino-acid polypeptide reads, in one-letter code: Large ribosomal subunit protein eL20 (177 aa).

The protein belongs to the eukaryotic ribosomal protein eL20 family.

This is Large ribosomal subunit protein eL20 (RpL18A) from Spodoptera frugiperda (Fall armyworm).